We begin with the raw amino-acid sequence, 322 residues long: Methionyl-tRNA formyltransferase (322 aa).

(6S)-5,6,7,8-tetrahydrofolate is bound at residue 115–118 (SLLP).

Belongs to the Fmt family.

It carries out the reaction L-methionyl-tRNA(fMet) + (6R)-10-formyltetrahydrofolate = N-formyl-L-methionyl-tRNA(fMet) + (6S)-5,6,7,8-tetrahydrofolate + H(+). Functionally, attaches a formyl group to the free amino group of methionyl-tRNA(fMet). The formyl group appears to play a dual role in the initiator identity of N-formylmethionyl-tRNA by promoting its recognition by IF2 and preventing the misappropriation of this tRNA by the elongation apparatus. The polypeptide is Methionyl-tRNA formyltransferase (Treponema denticola (strain ATCC 35405 / DSM 14222 / CIP 103919 / JCM 8153 / KCTC 15104)).